A 378-amino-acid polypeptide reads, in one-letter code: Cytochrome b (378 aa).

4 helical membrane-spanning segments follow: residues 33–53 (SGSL…FLSM), 77–98 (WLIR…YFHI), 113–133 (XNVG…GYVL), and 178–198 (FFAF…IHLI). The heme b site is built by His83 and His97. His196 contacts heme b. His201 is a binding site for a ubiquinone. 4 helical membrane-spanning segments follow: residues 226 to 246 (FKDL…ALFS), 288 to 308 (LGGV…PILH), 320 to 340 (LTQF…WIGG), and 347 to 367 (FIII…VLFP).

Belongs to the cytochrome b family. The cytochrome bc1 complex contains 3 respiratory subunits (MT-CYB, CYC1 and UQCRFS1), 2 core proteins (UQCRC1 and UQCRC2) and probably 6 low-molecular weight proteins. Heme b serves as cofactor.

The protein localises to the mitochondrion inner membrane. Its function is as follows. Component of the ubiquinol-cytochrome c reductase complex (complex III or cytochrome b-c1 complex) that is part of the mitochondrial respiratory chain. The b-c1 complex mediates electron transfer from ubiquinol to cytochrome c. Contributes to the generation of a proton gradient across the mitochondrial membrane that is then used for ATP synthesis. In Nannacara anomala (Goldeneye cichlid), this protein is Cytochrome b (mt-cyb).